The chain runs to 450 residues: Tripartite motif-containing protein 64C (450 aa).

The RING-type zinc finger occupies 15-56 (CCICVNYFIDPVTTDCVHSFCRPCLCLCSEEGRAPMRCPLCR). The segment at 87 to 128 (SSDNICVLHEETKELFCEADKRLLCGPCSESPEHMAHSHSPI) adopts a B box-type zinc-finger fold. 4 residues coordinate Zn(2+): Cys-92, His-95, Cys-114, and His-120. Positions 191-218 (DEEEQRHLQALEREAKELFQQLQDSQVR) form a coiled coil. One can recognise a B30.2/SPRY domain in the interval 269 to 450 (ELTSWCITGV…LRPFFCFGCT (182 aa)).

Belongs to the TRIM/RBCC family.

This is Tripartite motif-containing protein 64C (TRIM64C) from Homo sapiens (Human).